The primary structure comprises 339 residues: MATTTMTMIQALRSAMDVMLERDDNVVVYGQDVGYFGGVFRCTEGLQTKYGKSRVFDAPISESGIVGTAVGMGAYGLRPVVEIQFADYFYPASDQIVSEMARLRYRSAGEFIAPLTLRMPCGGGIYGGQTHSQSPEAMFTQVCGLRTVMPSNPYDAKGLLIASIECDDPVIFLEPKRLYNGPFDGHHDRPVTPWSKHPHSAVPDGYYTVPLDKAAITRPGNDVSVLTYGTTVYVAQVAAEESGVDAEVIDLRSLWPLDLDTIVESVKKTGRCVVVHEATRTCGFGAELVSLVQEHCFHHLEAPIERVTGWDTPYPHAQEWAYFPGPSRVGAALKKVMEV.

In terms of assembly, heterodimer of an alpha and a beta chain. It depends on thiamine diphosphate as a cofactor.

It catalyses the reaction N(6)-[(R)-lipoyl]-L-lysyl-[protein] + 3-methyl-2-oxobutanoate + H(+) = N(6)-[(R)-S(8)-2-methylpropanoyldihydrolipoyl]-L-lysyl-[protein] + CO2. The branched-chain alpha-keto dehydrogenase complex catalyzes the overall conversion of alpha-keto acids to acyl-CoA and CO(2). It contains multiple copies of three enzymatic components: branched-chain alpha-keto acid decarboxylase (E1), lipoamide acyltransferase (E2) and lipoamide dehydrogenase (E3). This chain is 2-oxoisovalerate dehydrogenase subunit beta (bkdA2), found in Pseudomonas putida (Arthrobacter siderocapsulatus).